The primary structure comprises 132 residues: Small ribosomal subunit protein uS8 (132 aa).

Belongs to the universal ribosomal protein uS8 family. As to quaternary structure, part of the 30S ribosomal subunit. Contacts proteins S5 and S12.

One of the primary rRNA binding proteins, it binds directly to 16S rRNA central domain where it helps coordinate assembly of the platform of the 30S subunit. The polypeptide is Small ribosomal subunit protein uS8 (Rickettsia canadensis (strain McKiel)).